Reading from the N-terminus, the 165-residue chain is Protein OPG091 (165 aa).

This sequence belongs to the orthopoxvirus OPG091 family.

The protein localises to the virion. It localises to the host cytoplasm. Contributes to vaccinia virus virulence in mice but not to replication in cell culture. The polypeptide is Protein OPG091 (OPG091) (Homo sapiens (Human)).